A 539-amino-acid chain; its full sequence is Glycerophosphoinositol inositolphosphodiesterase GDPD2 (539 aa).

Residues M1–C38 lie on the Cytoplasmic side of the membrane. The chain crosses the membrane as a helical span at residues I39 to L59. Residues V60 to A85 are Extracellular-facing. A helical membrane pass occupies residues F86–L106. At L107–K121 the chain is on the cytoplasmic side. Residues V122 to W142 traverse the membrane as a helical segment. The Extracellular portion of the chain corresponds to Q143 to Q154. A helical membrane pass occupies residues A155 to V175. Topologically, residues A176 to K188 are cytoplasmic. The chain crosses the membrane as a helical span at residues I189–I209. Topologically, residues S210–Y490 are extracellular. In terms of domain architecture, GP-PDE spans P224–R479. A divalent metal cation is bound by residues E256, D258, and H271. A glycan (N-linked (GlcNAc...) asparagine) is linked at N442. The helical transmembrane segment at L491–L511 threads the bilayer. Residues Q512–E539 are Cytoplasmic-facing.

Belongs to the glycerophosphoryl diester phosphodiesterase family. Ca(2+) serves as cofactor.

The protein resides in the cell membrane. It is found in the cytoplasm. It localises to the cytoskeleton. The enzyme catalyses sn-glycero-3-phospho-1D-myo-inositol + H2O = 1D-myo-inositol 1-phosphate + glycerol + H(+). Functionally, has glycerophosphoinositol inositolphosphodiesterase activity and specifically hydrolyzes glycerophosphoinositol, with no activity for other substrates such as glycerophosphoinositol 4-phosphate, glycerophosphocholine, glycerophosphoethanolamine, and glycerophosphoserine. Accelerates the program of osteoblast differentiation and growth. May play a role in remodeling of the actin cytoskeleton. The polypeptide is Glycerophosphoinositol inositolphosphodiesterase GDPD2 (GDPD2) (Homo sapiens (Human)).